We begin with the raw amino-acid sequence, 156 residues long: ATP synthase subunit b (156 aa).

Residues 7–29 form a helical membrane-spanning segment; that stretch reads LFAQMVVFLVLAWFTMKFVWPPL.

This sequence belongs to the ATPase B chain family. F-type ATPases have 2 components, F(1) - the catalytic core - and F(0) - the membrane proton channel. F(1) has five subunits: alpha(3), beta(3), gamma(1), delta(1), epsilon(1). F(0) has three main subunits: a(1), b(2) and c(10-14). The alpha and beta chains form an alternating ring which encloses part of the gamma chain. F(1) is attached to F(0) by a central stalk formed by the gamma and epsilon chains, while a peripheral stalk is formed by the delta and b chains.

The protein resides in the cell inner membrane. In terms of biological role, f(1)F(0) ATP synthase produces ATP from ADP in the presence of a proton or sodium gradient. F-type ATPases consist of two structural domains, F(1) containing the extramembraneous catalytic core and F(0) containing the membrane proton channel, linked together by a central stalk and a peripheral stalk. During catalysis, ATP synthesis in the catalytic domain of F(1) is coupled via a rotary mechanism of the central stalk subunits to proton translocation. Component of the F(0) channel, it forms part of the peripheral stalk, linking F(1) to F(0). This Burkholderia vietnamiensis (strain G4 / LMG 22486) (Burkholderia cepacia (strain R1808)) protein is ATP synthase subunit b.